Consider the following 530-residue polypeptide: Chaperone Ric-8A (530 aa).

Ser-435 is modified (phosphoserine). Phosphothreonine occurs at positions 440 and 442. Ser-501, Ser-522, Ser-523, and Ser-527 each carry phosphoserine.

The protein belongs to the synembryn family. In terms of assembly, interacts with GDP-bound G alpha proteins GNAI1, GNAO1 and GNAQ, and with GNA13 with lower affinity. Does not interact with G-alpha proteins when they are in complex with subunits beta and gamma. Interacts (via C-terminus) with RGS14; the interaction stimulates the dissociation of the complex between RGS14 and the active GTP-bound form of GNAI1. Interacts with NCS1; interaction is favored in the absence of Ca(2+) and myristoylation of NCS1 is not required. Post-translationally, phosphorylated at Ser-435 and Thr-440 by CK2, stabilizing its interface with G alpha proteins.

It is found in the cytoplasm. The protein localises to the cell cortex. In terms of biological role, chaperone that specifically binds and folds nascent G alpha proteins prior to G protein heterotrimer formation, promoting their stability and activity: folds GNAI1, GNAO1, GNA13 and GNAQ. Does not fold G(s) G-alpha proteins GNAS nor GNAL. Also acts as a guanine nucleotide exchange factor (GEF) for G alpha proteins by stimulating exchange of bound GDP for free GTP. Involved in regulation of microtubule pulling forces during mitotic movement of chromosomes by stimulating G(i)-alpha protein (GNAI1), possibly leading to release G(i)-alpha-GTP and NuMA proteins from the NuMA-GPSM2-G(i)-alpha-GDP complex. Also acts as an activator for G(q)-alpha (GNAQ) protein by enhancing the G(q)-coupled receptor-mediated ERK activation. The protein is Chaperone Ric-8A (RIC8A) of Macaca fascicularis (Crab-eating macaque).